The primary structure comprises 432 residues: 23S rRNA (uracil(1939)-C(5))-methyltransferase RlmD (432 aa).

One can recognise a TRAM domain in the interval 1-54 (MNPVVDILSLDHEGHGVARLDGKVTFVDGALAGERAEIAIFRKHAKYNSANAVA). Residues C67, C73, C76, and C155 each coordinate [4Fe-4S] cluster. Residues Q264, F293, N298, E314, N341, and D362 each contribute to the S-adenosyl-L-methionine site. Residue C389 is the Nucleophile of the active site.

The protein belongs to the class I-like SAM-binding methyltransferase superfamily. RNA M5U methyltransferase family. RlmD subfamily.

It catalyses the reaction uridine(1939) in 23S rRNA + S-adenosyl-L-methionine = 5-methyluridine(1939) in 23S rRNA + S-adenosyl-L-homocysteine + H(+). Catalyzes the formation of 5-methyl-uridine at position 1939 (m5U1939) in 23S rRNA. This Thiobacillus denitrificans (strain ATCC 25259 / T1) protein is 23S rRNA (uracil(1939)-C(5))-methyltransferase RlmD.